A 93-amino-acid chain; its full sequence is Stromal cell-derived factor 1 (93 aa).

The N-terminal stretch at 1–21 is a signal peptide; the sequence is MNAKVVVVLVLVLTALCLSDG. Positions 22–23 match the Receptor activation motif motif; the sequence is KP. Positions 29 to 33 are receptor and heparin binding; it reads RCPCR. Disulfide bonds link cysteine 30-cysteine 55 and cysteine 32-cysteine 71. 3 receptor binding regions span residues 39–41, 48–50, and 60–70; these read VAR, KIL, and VARLKNNNRQV. Heparin is bound by residues 41 to 51, arginine 62, glutamine 69, and lysine 85; that span reads RANVKHLKILN.

This sequence belongs to the intercrine alpha (chemokine CxC) family. As to quaternary structure, monomer or homodimer; in equilibrium. Dimer formation is induced by non acidic pH and the presence of multivalent anions, and by binding to CXCR4 or heparin. Monomeric form is required for full chemotactic activity and resistance to ischemia/reperfusion injury, whereas the dimeric form acts as a partial agonist of CXCR4, stimulating Ca2+ mobilization but with no chemotactic activity and instead acts as a selective antagonist that blocks chemotaxis induced by the monomeric form. Interacts with the N-terminus of ACKR3. Interacts with integrin subunit ITGB3 (via the allosteric site (site 2)). Interacts with TNFAIP6 (via Link domain). In terms of assembly, (Microbial infection) Interacts with molluscum contagiosum virus protein MC148. Post-translationally, processed forms SDF-1-beta(3-72) and SDF-1-alpha(3-67) are produced after secretion by proteolytic cleavage of isoforms Beta and Alpha, respectively. The N-terminal processing is probably achieved by DPP4. Isoform Alpha is first cleaved at the C-terminus to yield a SDF-1-alpha(1-67) intermediate before being processed at the N-terminus. The C-terminal processing of isoform Alpha is reduced by binding to heparin and, probably, cell surface proteoglycans. Isoform Alpha and isoform Beta are ubiquitously expressed, with highest levels detected in liver, pancreas and spleen. Isoform Gamma is mainly expressed in heart, with weak expression detected in several other tissues. Isoform Delta, isoform Epsilon and isoform Theta have highest expression levels in pancreas, with lower levels detected in heart, kidney, liver and spleen.

Its subcellular location is the secreted. Functionally, chemoattractant active on T-lymphocytes and monocytes but not neutrophils. Activates the C-X-C chemokine receptor CXCR4 to induce a rapid and transient rise in the level of intracellular calcium ions and chemotaxis. SDF-1-beta(3-72) and SDF-1-alpha(3-67) show a reduced chemotactic activity. Binding to cell surface proteoglycans seems to inhibit formation of SDF-1-alpha(3-67) and thus to preserve activity on local sites. Also binds to atypical chemokine receptor ACKR3, which activates the beta-arrestin pathway and acts as a scavenger receptor for SDF-1. Binds to the allosteric site (site 2) of integrins and activates integrins ITGAV:ITGB3, ITGA4:ITGB1 and ITGA5:ITGB1 in a CXCR4-independent manner. Acts as a positive regulator of monocyte migration and a negative regulator of monocyte adhesion via the LYN kinase. Stimulates migration of monocytes and T-lymphocytes through its receptors, CXCR4 and ACKR3, and decreases monocyte adherence to surfaces coated with ICAM-1, a ligand for beta-2 integrins. SDF1A/CXCR4 signaling axis inhibits beta-2 integrin LFA-1 mediated adhesion of monocytes to ICAM-1 through LYN kinase. Inhibits CXCR4-mediated infection by T-cell line-adapted HIV-1. Plays a protective role after myocardial infarction. Induces down-regulation and internalization of ACKR3 expressed in various cells. Has several critical functions during embryonic development; required for B-cell lymphopoiesis, myelopoiesis in bone marrow and heart ventricular septum formation. Stimulates the proliferation of bone marrow-derived B-cell progenitors in the presence of IL7 as well as growth of stromal cell-dependent pre-B-cells. The chain is Stromal cell-derived factor 1 (CXCL12) from Homo sapiens (Human).